Consider the following 254-residue polypeptide: Triosephosphate isomerase (254 aa).

Residue 12-14 (NWK) participates in substrate binding. Catalysis depends on His-99, which acts as the Electrophile. The active-site Proton acceptor is the Glu-169. Substrate contacts are provided by residues Gly-175, Ser-214, and 235–236 (GG).

It belongs to the triosephosphate isomerase family. In terms of assembly, homodimer.

The protein localises to the cytoplasm. It carries out the reaction D-glyceraldehyde 3-phosphate = dihydroxyacetone phosphate. It participates in carbohydrate biosynthesis; gluconeogenesis. The protein operates within carbohydrate degradation; glycolysis; D-glyceraldehyde 3-phosphate from glycerone phosphate: step 1/1. Functionally, involved in the gluconeogenesis. Catalyzes stereospecifically the conversion of dihydroxyacetone phosphate (DHAP) to D-glyceraldehyde-3-phosphate (G3P). This is Triosephosphate isomerase from Brucella abortus biovar 1 (strain 9-941).